Here is a 121-residue protein sequence, read N- to C-terminus: Nitrogenase-stabilizing/protective protein NifW (121 aa).

Belongs to the NifW family. In terms of assembly, homotrimer; associates with NifD.

May protect the nitrogenase Fe-Mo protein from oxidative damage. The polypeptide is Nitrogenase-stabilizing/protective protein NifW (Synechococcus sp. (strain JA-2-3B'a(2-13)) (Cyanobacteria bacterium Yellowstone B-Prime)).